The following is a 259-amino-acid chain: GDP-perosamine N-formyltransferase (259 aa).

(6S)-5,6,7,8-tetrahydrofolate contacts are provided by residues 89–91 (SLI) and 139–143 (DENFD).

This sequence belongs to the Fmt family. As to quaternary structure, homodimer.

It carries out the reaction GDP-alpha-D-perosamine + (6R)-10-formyltetrahydrofolate = GDP-N-formyl-alpha-D-perosamine + (6S)-5,6,7,8-tetrahydrofolate + H(+). The protein operates within bacterial outer membrane biogenesis; lipopolysaccharide biosynthesis. Functionally, involved in the lipopolysaccharide (LPS) O-antigen biosynthesis. Catalyzes the transfer of a formyl group to GDP-perosamine, leading to the formation of GDP-N-formylperosamine. Is critical for full bacterial virulence. This chain is GDP-perosamine N-formyltransferase, found in Brucella abortus (strain 2308).